We begin with the raw amino-acid sequence, 460 residues long: MRQENDSLGIVEVPEDKLYGAQTARSQKYFSWAPEVMPKEVIRALVLIKQCAAKANHDLGFLDSKYCDMIVSAASEILEGGFEEHFPLKVWQTGSGTQSNMNVNEVIANLAIQRHGGVVGSKTPIHPNDHVNKSQSSNDVFPTAMHIAAVINLKKKLIPAMDHLQRALDAKVAEFRDCVKIGRTHLMDAVPMTLGQEFSGYSNQIRQSLERVAFSLTHMYELAIGGTAVGTGLNVPNGFIDKVIHYLRQETGEPFVAASNYFSALSNHDTLVNAHGVLATLACALTKIATDLSFLGSGPRCGLGELLFPENEPGSSIMPGKINPTQCEALQMVCAQVIGNNQAVIMGGSRGNFELNVMKPVIIYNFLQSVDILAGGMQAFADYFVSGLRVNKPRLKEYLDNSLMLVTALTPVLGYDKCSKMALKAFHDNINLKEACIQMGYLSAEEFDRLVVPESMVGKF.

Substrate is bound by residues 95-97 (SGT), 126-129 (HPND), 136-138 (SSN), and Thr184. His185 acts as the Proton donor/acceptor in catalysis. Residue Ser315 is part of the active site. Residues Ser316 and 321–323 (KIN) contribute to the substrate site.

The protein belongs to the class-II fumarase/aspartase family. Fumarase subfamily. Homotetramer.

It localises to the cytoplasm. The catalysed reaction is (S)-malate = fumarate + H2O. It functions in the pathway carbohydrate metabolism; tricarboxylic acid cycle; (S)-malate from fumarate: step 1/1. In terms of biological role, involved in the TCA cycle. Catalyzes the stereospecific interconversion of fumarate to L-malate. The protein is Fumarate hydratase class II of Chlamydia caviae (strain ATCC VR-813 / DSM 19441 / 03DC25 / GPIC) (Chlamydophila caviae).